We begin with the raw amino-acid sequence, 252 residues long: NLP effector protein Pc118356 (252 aa).

Residues 1 to 17 (MALTVLAATALTALIMG) form the signal peptide. N-linked (GlcNAc...) asparagine glycosylation is found at Asn20 and Asn67. The Hepta-peptide GHRHDWE motif signature appears at 121 to 127 (QDRHFWE). The N-linked (GlcNAc...) asparagine glycan is linked to Asn166.

The protein belongs to the Necrosis inducing protein (NPP1) family.

The protein localises to the secreted. Functionally, secreted effector that contributes strongly to virulence during infection by P.capsici. The chain is NLP effector protein Pc118356 from Phytophthora capsici.